The primary structure comprises 345 residues: Leucine zipper protein 2 (345 aa).

The first 19 residues, 1 to 19 (MKFNAAHYLLPLLPALVLS), serve as a signal peptide directing secretion. Residues 16-211 (LVLSTRQDYE…QMKAMKETVQ (196 aa)) adopt a coiled-coil conformation. N-linked (GlcNAc...) asparagine glycosylation is present at Asn-133. The leucine-zipper stretch occupies residues 164–192 (LRYGKKDLLFKAQQLTELEQKLAVAKNEL). The segment at 223 to 345 (PPLSLMPSNP…GTPAREEKLL (123 aa)) is disordered. A compositionally biased stretch (basic and acidic residues) spans 261-277 (GHHDSSQVQATKEESRR). Residues 298–313 (PQSNSTAESELTTQKL) are compositionally biased toward polar residues. The N-linked (GlcNAc...) asparagine glycan is linked to Asn-301.

In terms of tissue distribution, expression found only in the brain and spinal cord.

The protein localises to the secreted. This chain is Leucine zipper protein 2 (Luzp2), found in Mus musculus (Mouse).